We begin with the raw amino-acid sequence, 249 residues long: Proline-rich antigen (249 aa).

Pro residues-rich tracts occupy residues 1–20 and 38–87; these read MTDQPPPSGSNPTPAPPPPG and YPPP…PPGP. The tract at residues 1–87 is disordered; the sequence is MTDQPPPSGS…GAYAPPPPGP (87 aa). Residues 34-43 form a 1-1; approximate repeat; that stretch reads LGSAYPPPTA. The 5 X 10 AA tandem repeats of [PV]-G-G-S-Y-P-P-P-P-P stretch occupies residues 34 to 85; it reads LGSAYPPPTAPPVGGSYPPPPPPGGSYPPPPPPGGSYPPPPPSTGAYAPPPP. 3 tandem repeats follow at residues 46 to 55, 56 to 65, and 66 to 75. A 1-5; approximate repeat occupies 76–85; it reads STGAYAPPPP. Residues 99–242 enclose the RDD domain; it reads FWVTRVLAYV…KRQTLADKIM (144 aa). A run of 2 repeats spans residues 101–123 and 134–156. Positions 101–156 are 2 X 23 AA approximate repeats; sequence VTRVLAYVIDNIPATVLLGIGMLIQTLTKQEACVTDITQYNVNQYCATQPTGIGML. 3 helical membrane-spanning segments follow: residues 104–124, 151–171, and 212–232; these read VLAYVIDNIPATVLLGIGMLI, TGIGMLAFWFAWLMATAYLVW, and LAHFVDAVICCIGFLFPLWDS.

Belongs to the mycobacterial Pra family.

The protein localises to the cell membrane. This is Proline-rich antigen (ag36) from Mycobacterium leprae (strain TN).